Here is a 119-residue protein sequence, read N- to C-terminus: Large ribosomal subunit protein uL14 (119 aa).

The protein belongs to the universal ribosomal protein uL14 family. As to quaternary structure, part of the 50S ribosomal subunit. Forms a cluster with proteins L3 and L19. In the 70S ribosome, L14 and L19 interact and together make contacts with the 16S rRNA in bridges B5 and B8.

Binds to 23S rRNA. Forms part of two intersubunit bridges in the 70S ribosome. The polypeptide is Large ribosomal subunit protein uL14 (Ehrlichia canis (strain Jake)).